The chain runs to 313 residues: Homoserine O-succinyltransferase (313 aa).

The active-site Acyl-thioester intermediate is the cysteine 142. Lysine 163 and serine 192 together coordinate substrate. Histidine 235 (proton acceptor) is an active-site residue. The active site involves glutamate 237. Residue arginine 249 coordinates substrate.

Belongs to the MetA family.

The protein localises to the cytoplasm. It carries out the reaction L-homoserine + succinyl-CoA = O-succinyl-L-homoserine + CoA. It participates in amino-acid biosynthesis; L-methionine biosynthesis via de novo pathway; O-succinyl-L-homoserine from L-homoserine: step 1/1. Transfers a succinyl group from succinyl-CoA to L-homoserine, forming succinyl-L-homoserine. This Shewanella baltica (strain OS223) protein is Homoserine O-succinyltransferase.